The primary structure comprises 657 residues: Glycogen debranching enzyme (657 aa).

The active-site Nucleophile is the Asp-336. Residue Glu-371 is the Proton donor of the active site. The disordered stretch occupies residues 460–479 (ANGEENRDGTNNNYSNNHGK).

Belongs to the glycosyl hydrolase 13 family.

The enzyme catalyses Hydrolysis of (1-&gt;6)-alpha-D-glucosidic linkages to branches with degrees of polymerization of three or four glucose residues in limit dextrin.. Its pathway is glycan degradation; glycogen degradation. Functionally, removes maltotriose and maltotetraose chains that are attached by 1,6-alpha-linkage to the limit dextrin main chain, generating a debranched limit dextrin. In Escherichia coli (strain SMS-3-5 / SECEC), this protein is Glycogen debranching enzyme.